We begin with the raw amino-acid sequence, 607 residues long: COMPASS component cclA (607 aa).

The segment covering 1 to 19 (MASTHAAGSPAPSSSINSP) has biased composition (low complexity). 2 disordered regions span residues 1–22 (MAST…PILH) and 34–86 (GEGS…KSVA). Residues 57–69 (SKRNKRDSRKKRE) show a composition bias toward basic residues. The 220-residue stretch at 157–376 (IADTDFPHIK…YAFNLKETPA (220 aa)) folds into the B30.2/SPRY domain. The interval 587–607 (NTPITDVPVPPEPEDTPMTGG) is disordered.

Belongs to the cclA family. Component of the COMPASS complex.

The protein localises to the nucleus. The protein resides in the chromosome. Its subcellular location is the telomere. Component of the COMPASS (Set1C) complex that specifically mono-, di- and trimethylates histone H3 to form H3K4me1/2/3, which subsequently plays a role in telomere length maintenance and transcription elongation regulation. Controls the production of several secondary metabolites, including monodictyphenone, emodin and emodin derivatives, as well as two anti-osteoporosis polyketides, F9775A and F9775B. In Emericella nidulans (strain FGSC A4 / ATCC 38163 / CBS 112.46 / NRRL 194 / M139) (Aspergillus nidulans), this protein is COMPASS component cclA.